The primary structure comprises 252 residues: Thiamine thiazole synthase (252 aa).

Residues Ser-35, Glu-54–Lys-55, Gly-62, Val-126, and His-152–Asp-154 contribute to the NAD(+) site. Fe cation is bound by residues Asp-154 and His-169. Met-217 lines the NAD(+) pocket. Glycine is bound at residue Arg-227.

The protein belongs to the THI4 family. As to quaternary structure, homooctamer; tetramer of dimers. Requires Fe(2+) as cofactor.

It catalyses the reaction hydrogen sulfide + glycine + NAD(+) = ADP-5-ethyl-4-methylthiazole-2-carboxylate + nicotinamide + 3 H2O + H(+). The protein operates within cofactor biosynthesis; thiamine diphosphate biosynthesis. In terms of biological role, involved in the biosynthesis of the thiazole moiety of thiamine. Catalyzes the conversion of NAD and glycine to adenosine diphosphate 5-(2-hydroxyethyl)-4-methylthiazole-2-carboxylate (ADT), an adenylated thiazole intermediate, using free sulfide as a source of sulfur. The polypeptide is Thiamine thiazole synthase (Pyrococcus furiosus (strain ATCC 43587 / DSM 3638 / JCM 8422 / Vc1)).